Here is a 239-residue protein sequence, read N- to C-terminus: Small ribosomal subunit protein uS2 (239 aa).

Belongs to the universal ribosomal protein uS2 family.

In Prochlorococcus marinus (strain MIT 9313), this protein is Small ribosomal subunit protein uS2.